The sequence spans 77 residues: Small integral membrane protein 7 (77 aa).

The signal sequence occupies residues 1–17 (MIGDLLIFGTLLMNAGA). At 18-55 (VLNFKLKKRETQSQGFGDDSGSSSTGENIREFLLSLRY) the chain is on the extracellular side. Residues 56–76 (FRIFIALWNIFMMFCMIVLFG) traverse the membrane as a helical segment. Residue serine 77 is a topological domain, cytoplasmic.

It belongs to the SMIM7 family.

The protein resides in the membrane. The chain is Small integral membrane protein 7 (smim7) from Danio rerio (Zebrafish).